The chain runs to 267 residues: Cytochrome b (267 aa).

4 helical membrane passes run 4 to 24 (FGSLLGICLMTQILTGLLLAA), 48 to 69 (WLIRNLHANGASFFFICIYLHI), 84 to 104 (WNTGVILLLTLMATAFVGYVL), and 149 to 169 (FFTLHFLLPFMIAGLTIIHLT). Positions 54 and 68 each coordinate heme b. The heme b site is built by histidine 153 and histidine 167. Residue histidine 172 participates in a ubiquinone binding. Transmembrane regions (helical) follow at residues 197 to 217 (LKDILGFTLMFLPLMTLALFA) and 259 to 267 (LGGVLALAA).

Belongs to the cytochrome b family. As to quaternary structure, the cytochrome bc1 complex contains 11 subunits: 3 respiratory subunits (MT-CYB, CYC1 and UQCRFS1), 2 core proteins (UQCRC1 and UQCRC2) and 6 low-molecular weight proteins (UQCRH/QCR6, UQCRB/QCR7, UQCRQ/QCR8, UQCR10/QCR9, UQCR11/QCR10 and a cleavage product of UQCRFS1). This cytochrome bc1 complex then forms a dimer. The cofactor is heme b.

The protein resides in the mitochondrion inner membrane. In terms of biological role, component of the ubiquinol-cytochrome c reductase complex (complex III or cytochrome b-c1 complex) that is part of the mitochondrial respiratory chain. The b-c1 complex mediates electron transfer from ubiquinol to cytochrome c. Contributes to the generation of a proton gradient across the mitochondrial membrane that is then used for ATP synthesis. The polypeptide is Cytochrome b (MT-CYB) (Raphus cucullatus (Dodo)).